The primary structure comprises 215 residues: Octanoyltransferase (215 aa).

The BPL/LPL catalytic domain maps to 42–215; that stretch reads QNTPDEIWLL…AEKLKARLKQ (174 aa). Substrate contacts are provided by residues 81-88, 148-150, and 161-163; these read RGGQITYH, ALG, and GLA. Residue Cys179 is the Acyl-thioester intermediate of the active site.

The protein belongs to the LipB family.

It is found in the cytoplasm. It catalyses the reaction octanoyl-[ACP] + L-lysyl-[protein] = N(6)-octanoyl-L-lysyl-[protein] + holo-[ACP] + H(+). Its pathway is protein modification; protein lipoylation via endogenous pathway; protein N(6)-(lipoyl)lysine from octanoyl-[acyl-carrier-protein]: step 1/2. Catalyzes the transfer of endogenously produced octanoic acid from octanoyl-acyl-carrier-protein onto the lipoyl domains of lipoate-dependent enzymes. Lipoyl-ACP can also act as a substrate although octanoyl-ACP is likely to be the physiological substrate. This chain is Octanoyltransferase, found in Nitrosospira multiformis (strain ATCC 25196 / NCIMB 11849 / C 71).